The chain runs to 422 residues: Isocitrate dehydrogenase [NADP] (422 aa).

Residue threonine 94 coordinates NADP(+). Serine 103, asparagine 105, arginine 109, arginine 119, and arginine 143 together coordinate D-threo-isocitrate. A Mg(2+)-binding site is contributed by aspartate 310. NADP(+) contacts are provided by residues 344–350 (HGTAPKY), asparagine 357, tyrosine 396, and arginine 400.

It belongs to the isocitrate and isopropylmalate dehydrogenases family. As to quaternary structure, homodimer. It depends on Mg(2+) as a cofactor. Requires Mn(2+) as cofactor.

The catalysed reaction is D-threo-isocitrate + NADP(+) = 2-oxoglutarate + CO2 + NADPH. Its function is as follows. Catalyzes the oxidative decarboxylation of isocitrate to 2-oxoglutarate and carbon dioxide with the concomitant reduction of NADP(+). The protein is Isocitrate dehydrogenase [NADP] (icd) of Staphylococcus aureus (strain COL).